Here is a 405-residue protein sequence, read N- to C-terminus: Argininosuccinate synthase (405 aa).

9–17 (AYSGGLDTS) contacts ATP. Residues Tyr87 and Ser92 each contribute to the L-citrulline site. Gly117 contacts ATP. L-aspartate is bound by residues Thr119, Asn123, and Asp124. Asn123 contributes to the L-citrulline binding site. The L-citrulline site is built by Arg127, Ser176, Ser185, Glu262, and Tyr274.

Belongs to the argininosuccinate synthase family. Type 1 subfamily. In terms of assembly, homotetramer.

Its subcellular location is the cytoplasm. It catalyses the reaction L-citrulline + L-aspartate + ATP = 2-(N(omega)-L-arginino)succinate + AMP + diphosphate + H(+). It functions in the pathway amino-acid biosynthesis; L-arginine biosynthesis; L-arginine from L-ornithine and carbamoyl phosphate: step 2/3. This chain is Argininosuccinate synthase, found in Caldicellulosiruptor saccharolyticus (strain ATCC 43494 / DSM 8903 / Tp8T 6331).